Consider the following 505-residue polypeptide: MAQVINTNSLSLLTQNNLNKSQSSLSSAIERLSSGLRINSAKDDAAGQAIANRFTSNIKGLTQASRNANDGISIAQTTEGALNEINNNLQRVRELSVQATNGTNSDSDLKSIQDEIQQRLEEIDRVSNQTQFNGVKVLSQDNQMKIQVGANDGETITIDLQKIDVKSLGLDGFNVNGPKEATVGDLKSSFKNVTGYDTYAAGADKYRVDINSGAVVTDAVAPDKVYVNAANGQLTTDDAENNTAVDLFKTTKSAAGTAEAKAIAGAIKGGKEGDTFDYKGVTFTIDTKTGDDGNGKVSTTINGEKVTLTVADIAIGAADVNAATLQSSKNVYTSVVNGQFTFDDKTKSESAKLSDLEANNAVKGESKITVNGAEYTANATGDKITLAGKTMFIDKTASGVSTLINEDAAAAKKSTANPLASIDSALSKVDAVRSSLGAIQNRFDSAITNLGNTVTNLNSARSRIEDADYATEVSNMSKAQILQQAGTSVLAQANQVPQNVLSLLR.

This sequence belongs to the bacterial flagellin family.

The protein resides in the secreted. Its subcellular location is the bacterial flagellum. Functionally, flagellin is the subunit protein which polymerizes to form the filaments of bacterial flagella. In Salmonella naestved, this protein is Phase 1 flagellin (fliC).